A 333-amino-acid polypeptide reads, in one-letter code: Dihydroorotate dehydrogenase (quinone) (333 aa).

FMN contacts are provided by residues 56 to 60 and T80; that span reads AGLDK. K60 provides a ligand contact to substrate. 105-109 is a substrate binding site; that stretch reads NRMGF. FMN contacts are provided by N133 and N166. N166 serves as a coordination point for substrate. The active-site Nucleophile is the S169. Position 171 (N171) interacts with substrate. Positions 211 and 239 each coordinate FMN. 240 to 241 provides a ligand contact to substrate; the sequence is NT. Residues G262, G291, and 312–313 contribute to the FMN site; that span reads YS.

It belongs to the dihydroorotate dehydrogenase family. Type 2 subfamily. In terms of assembly, monomer. The cofactor is FMN.

The protein localises to the cell membrane. It carries out the reaction (S)-dihydroorotate + a quinone = orotate + a quinol. It participates in pyrimidine metabolism; UMP biosynthesis via de novo pathway; orotate from (S)-dihydroorotate (quinone route): step 1/1. In terms of biological role, catalyzes the conversion of dihydroorotate to orotate with quinone as electron acceptor. This chain is Dihydroorotate dehydrogenase (quinone), found in Legionella pneumophila (strain Corby).